The primary structure comprises 302 residues: Sulfate adenylyltransferase subunit 2 (302 aa).

This sequence belongs to the PAPS reductase family. CysD subfamily. Heterodimer composed of CysD, the smaller subunit, and CysN.

The catalysed reaction is sulfate + ATP + H(+) = adenosine 5'-phosphosulfate + diphosphate. It functions in the pathway sulfur metabolism; hydrogen sulfide biosynthesis; sulfite from sulfate: step 1/3. In terms of biological role, with CysN forms the ATP sulfurylase (ATPS) that catalyzes the adenylation of sulfate producing adenosine 5'-phosphosulfate (APS) and diphosphate, the first enzymatic step in sulfur assimilation pathway. APS synthesis involves the formation of a high-energy phosphoric-sulfuric acid anhydride bond driven by GTP hydrolysis by CysN coupled to ATP hydrolysis by CysD. The sequence is that of Sulfate adenylyltransferase subunit 2 from Shigella dysenteriae serotype 1 (strain Sd197).